Here is a 250-residue protein sequence, read N- to C-terminus: Proteasome subunit alpha type-8 (250 aa).

It belongs to the peptidase T1A family. As to quaternary structure, component of the outer alpha-ring of the 20S proteasome core which is composed of 28 subunits that are arranged in four stacked rings, resulting in a barrel-shaped structure. The catalytic chamber with the active sites is on the inside of the barrel. Interacts with canonical subunits of the spermatoproteasome, including proteasome activators PSME4 (also called PA200) and PSME3 (also called PA28-gamma). Interacts with proteasome-interacting proteins chaperones including CCT6B and CCT2, ubiquitin ligases (TRIP12, NEDD4, TRIM36 and RAD18), and ubiquitin specific proteases such as USP9X, USP34, USP5 and USP47. Interacts with meiotic proteins cyclin dependent kinase CDK1 and the ATPase TRIP13 as well as proteins of the synaptonemal complex SIX6OS1 and SYCE3.

The protein localises to the nucleus. Its function is as follows. Component of the spermatoproteasome, a proteasome specifically found in testis that promotes acetylation-dependent degradation of histones, thereby participating actively to the exchange of histones during spermatogenesis. The proteasome is a protein complex that degrades unneeded or damaged proteins by proteolysis, a chemical reaction that breaks peptide bonds. Required for 20S core proteasome assembly, essential for the degradation of meiotic proteins RAD51 and RPA1 at late prophase I and the progression of meiosis I during spermatogenesis. Localizes to the synaptonemal complex, a 'zipper'-like structure that holds homologous chromosome pairs in synapsis during meiotic prophase I. The polypeptide is Proteasome subunit alpha type-8 (Mus musculus (Mouse)).